Consider the following 475-residue polypeptide: B-type cell cycle switch protein ccs52A (475 aa).

The disordered stretch occupies residues 1–29 (MDGTGNRNPPPTSTVGDNSPPPEPSPESL). Residues 7 to 28 (RNPPPTSTVGDNSPPPEPSPES) carry the PEST motif motif. Ser-43 and Ser-45 each carry phosphoserine. A C-box motif is present at residues 51–57 (DRFIPSR). The CSM motif motif lies at 80–91 (AYTTLLRTALFG). The residue at position 99 (Thr-99) is a Phosphothreonine. Ser-144 and Ser-155 each carry phosphoserine. WD repeat units follow at residues 166–203 (QDDFYLNLVDWSSHNVLAVGLGNCVYLWNACSSKVTKL), 207–246 (GVDDCVCSVGWAQRGTHLAVGTNNGKVQIWDAARCKKIRS), 249–289 (GHRL…SKLS), 290–329 (GHKSEVCGLKWSYDNRELASGGNDNKLFVWNQHSTQPVLK), 332–374 (EHTA…HLSC), 376–417 (DTGS…KLAT), and 420–459 (GHTYRVLYLAISPDGQTIVTGAGDETLRFWNVFPSPKSQN). The residue at position 454 (Ser-454) is a Phosphoserine.

It belongs to the WD repeat CDC20/Fizzy family. In terms of tissue distribution, mostly expressed in nodules, and, to a lower extent, in root tips, stems, hypocotyls, leaves, flower buds and flowers.

It is found in the nucleus. It participates in protein modification; protein ubiquitination. Component of the anaphase promoting complex/cyclosome (APC/C), a cell cycle-regulated E3 ubiquitin-protein ligase complex that controls progression through mitosis and the G1 phase of the cell cycle. Required to switch form cell proliferation to cell differentiation, endoreduplication and ploidy-dependent cell enlargement, including during nodulation, before nodule differentiation. Involved in root-knot nematode Meloidogyne incognita giant cells formation. This Medicago truncatula (Barrel medic) protein is B-type cell cycle switch protein ccs52A.